The following is a 144-amino-acid chain: MALERTFSIVKPDAVKRNLVGEIYHRIEKAGLQIIAAKMVSLTEAQASGFYAEHEGKEFFGPLKEFMTSGPIMVQVLEGENAIARYRELMGKTNPEEAACGTIRADYAISMRYNSVHGSDSPESAAREIEFFFPESEICPRPAE.

Positions 11, 59, 87, 93, 104, and 114 each coordinate ATP. Histidine 117 functions as the Pros-phosphohistidine intermediate in the catalytic mechanism.

Belongs to the NDK family. Homotetramer. Mg(2+) serves as cofactor.

Its subcellular location is the cytoplasm. The catalysed reaction is a 2'-deoxyribonucleoside 5'-diphosphate + ATP = a 2'-deoxyribonucleoside 5'-triphosphate + ADP. It catalyses the reaction a ribonucleoside 5'-diphosphate + ATP = a ribonucleoside 5'-triphosphate + ADP. In terms of biological role, major role in the synthesis of nucleoside triphosphates other than ATP. The ATP gamma phosphate is transferred to the NDP beta phosphate via a ping-pong mechanism, using a phosphorylated active-site intermediate. The protein is Nucleoside diphosphate kinase of Vibrio atlanticus (strain LGP32) (Vibrio splendidus (strain Mel32)).